The primary structure comprises 155 residues: Small ribosomal subunit protein uS7 (155 aa).

It belongs to the universal ribosomal protein uS7 family. Part of the 30S ribosomal subunit. Contacts proteins S9 and S11.

One of the primary rRNA binding proteins, it binds directly to 16S rRNA where it nucleates assembly of the head domain of the 30S subunit. Is located at the subunit interface close to the decoding center, probably blocks exit of the E-site tRNA. The protein is Small ribosomal subunit protein uS7 of Chlorobium limicola (strain DSM 245 / NBRC 103803 / 6330).